A 709-amino-acid polypeptide reads, in one-letter code: Nicastrin (709 aa).

The N-terminal stretch at 1-33 is a signal peptide; sequence MATAGGGSGADPGSRGLLRLLSFCVLLAGLCRG. Topologically, residues 34–669 are extracellular; that stretch reads NSVERKIYIP…IFLIASKELE (636 aa). N-linked (GlcNAc...) asparagine glycans are attached at residues asparagine 45 and asparagine 55. 2 disulfide bridges follow: cysteine 50-cysteine 62 and cysteine 140-cysteine 159. 3 N-linked (GlcNAc...) asparagine glycosylation sites follow: asparagine 187, asparagine 200, and asparagine 204. 2 cysteine pairs are disulfide-bonded: cysteine 195–cysteine 213 and cysteine 230–cysteine 248. 11 N-linked (GlcNAc...) asparagine glycosylation sites follow: asparagine 264, asparagine 387, asparagine 417, asparagine 435, asparagine 464, asparagine 506, asparagine 530, asparagine 562, asparagine 573, asparagine 580, and asparagine 612. Cysteine 586 and cysteine 620 are oxidised to a cystine. A helical transmembrane segment spans residues 670-690; the sequence is LITLTVGFGILIFSLIVTYCI. Over 691-709 the chain is Cytoplasmic; the sequence is NAKADVLFIAPREPGAVSY.

The protein belongs to the nicastrin family. Component of the gamma-secretase complex. The functional gamma-secretase complex is composed of at least four polypeptides: a presenilin homodimer (PSEN1 or PSEN2), nicastrin (NCSTN), APH1 (APH1A or APH1B) and PSENEN/PEN2. Binds to proteolytic processed C-terminal fragments C83 and C99 of the amyloid precursor protein (APP). Interacts with PSEN1 and PSEN2. N-glycosylated. As to expression, detected in brain (at protein level). Widely expressed.

Its subcellular location is the membrane. The protein resides in the cytoplasmic vesicle membrane. The protein localises to the melanosome. Its function is as follows. Essential subunit of the gamma-secretase complex, an endoprotease complex that catalyzes the intramembrane cleavage of integral membrane proteins such as Notch receptors and APP (amyloid-beta precursor protein). The gamma-secretase complex plays a role in Notch and Wnt signaling cascades and regulation of downstream processes via its role in processing key regulatory proteins, and by regulating cytosolic CTNNB1 levels. This is Nicastrin (NCSTN) from Homo sapiens (Human).